A 357-amino-acid chain; its full sequence is Serpentine receptor class epsilon-31 (357 aa).

7 consecutive transmembrane segments (helical) span residues 28-48 (VISI…NLSI), 61-81 (LMFL…GKFI), 121-141 (LLIF…FGIL), 165-185 (IPIF…FIVI), 192-212 (IIAR…WLFV), 253-273 (LVAV…SLTF), and 283-303 (FVEN…MFSI).

It belongs to the nematode receptor-like protein sre family.

The protein resides in the membrane. The chain is Serpentine receptor class epsilon-31 (sre-31) from Caenorhabditis elegans.